A 346-amino-acid polypeptide reads, in one-letter code: N-acetyl-gamma-glutamyl-phosphate reductase (346 aa).

The active site involves C150.

The protein belongs to the NAGSA dehydrogenase family. Type 1 subfamily.

The protein localises to the cytoplasm. The enzyme catalyses N-acetyl-L-glutamate 5-semialdehyde + phosphate + NADP(+) = N-acetyl-L-glutamyl 5-phosphate + NADPH + H(+). It participates in amino-acid biosynthesis; L-arginine biosynthesis; N(2)-acetyl-L-ornithine from L-glutamate: step 3/4. In terms of biological role, catalyzes the NADPH-dependent reduction of N-acetyl-5-glutamyl phosphate to yield N-acetyl-L-glutamate 5-semialdehyde. This Moorella thermoacetica (strain ATCC 39073 / JCM 9320) protein is N-acetyl-gamma-glutamyl-phosphate reductase.